Consider the following 1210-residue polypeptide: Microtubule-associated tumor suppressor 1 homolog (1210 aa).

Disordered stretches follow at residues 1–21 (MNDD…IRDK), 370–404 (DPHI…PYEM), 446–482 (VENG…NTTV), 513–545 (QPKD…LTMM), and 585–618 (HSKN…AGSE). The segment covering 370–379 (DPHIDSHDND) has biased composition (basic and acidic residues). 3 positions are modified to phosphoserine: Ser-375, Ser-380, and Ser-393. Over residues 381–398 (DIQSSTEELTLRSVSGQR) the composition is skewed to polar residues. Positions 446–455 (VENGPRDAKR) are enriched in basic and acidic residues. Residues 473–482 (KSATKTNTTV) show a composition bias toward polar residues. A compositionally biased stretch (low complexity) spans 524-534 (PSPQVTGGSSP). Polar residues predominate over residues 585–605 (HSKNASLGVPRTTSATKSNQE). Ser-621 bears the Phosphoserine mark. The segment at 683-771 (SKSLLVGSAP…YEEKPPKQAF (89 aa)) is disordered. Residues 692 to 702 (PKTSTTPGRSS) show a composition bias toward polar residues. Residues 876–1171 (IQHLLSEREE…RLSMENEELL (296 aa)) adopt a coiled-coil conformation. Ser-1143, Ser-1164, Ser-1185, Ser-1195, Ser-1199, Ser-1201, Ser-1203, Ser-1204, and Ser-1208 each carry phosphoserine. The interval 1177 to 1210 (GDLCSPKRSPTSSAIPFQSPRNSGSFSSPSISPR) is disordered. Low complexity predominate over residues 1195 to 1210 (SPRNSGSFSSPSISPR).

This sequence belongs to the MTUS1 family. In terms of assembly, homodimer. Interacts with AGTR2. Interacts with PTPN6. As to expression, ubiquitously expressed, with highest levels in uterus and adrenal gland.

The protein resides in the mitochondrion. Its subcellular location is the golgi apparatus. It is found in the cell membrane. It localises to the nucleus. In terms of biological role, cooperates with AGTR2 to inhibit ERK2 activation and cell proliferation. May be required for AGTR2 cell surface expression. Together with PTPN6, induces UBE2V2 expression upon angiotensin-II stimulation. The protein is Microtubule-associated tumor suppressor 1 homolog (Mtus1) of Mus musculus (Mouse).